The sequence spans 113 residues: Putative anti-sigma factor antagonist TM_1081 (113 aa).

Residues 1–110 form the STAS domain; that stretch reads MFPYKIVDDV…DTISEAMEEV (110 aa). Ser55 bears the Phosphoserine mark.

It belongs to the anti-sigma-factor antagonist family. Phosphorylated on a serine residue.

In the phosphorylated form it could act as an anti-anti-sigma factor that counteracts an anti-sigma factor and thus releases a sigma factor from inhibition. This is Putative anti-sigma factor antagonist TM_1081 from Thermotoga maritima (strain ATCC 43589 / DSM 3109 / JCM 10099 / NBRC 100826 / MSB8).